The sequence spans 131 residues: Aspartate 1-decarboxylase (131 aa).

The active-site Schiff-base intermediate with substrate; via pyruvic acid is the S25. At S25 the chain carries Pyruvic acid (Ser). T57 is a binding site for substrate. Y58 serves as the catalytic Proton donor. A substrate-binding site is contributed by 73–75 (GAA).

This sequence belongs to the PanD family. As to quaternary structure, heterooctamer of four alpha and four beta subunits. It depends on pyruvate as a cofactor. In terms of processing, is synthesized initially as an inactive proenzyme, which is activated by self-cleavage at a specific serine bond to produce a beta-subunit with a hydroxyl group at its C-terminus and an alpha-subunit with a pyruvoyl group at its N-terminus.

The protein resides in the cytoplasm. It carries out the reaction L-aspartate + H(+) = beta-alanine + CO2. The protein operates within cofactor biosynthesis; (R)-pantothenate biosynthesis; beta-alanine from L-aspartate: step 1/1. In terms of biological role, catalyzes the pyruvoyl-dependent decarboxylation of aspartate to produce beta-alanine. This Anaeromyxobacter sp. (strain K) protein is Aspartate 1-decarboxylase.